The chain runs to 160 residues: Cytochrome b6-f complex subunit 4 (160 aa).

Transmembrane regions (helical) follow at residues L36–V56, L95–E115, and A131–I151.

This sequence belongs to the cytochrome b family. PetD subfamily. As to quaternary structure, the 4 large subunits of the cytochrome b6-f complex are cytochrome b6, subunit IV (17 kDa polypeptide, PetD), cytochrome f and the Rieske protein, while the 4 small subunits are PetG, PetL, PetM and PetN. The complex functions as a dimer.

The protein localises to the cellular thylakoid membrane. Its function is as follows. Component of the cytochrome b6-f complex, which mediates electron transfer between photosystem II (PSII) and photosystem I (PSI), cyclic electron flow around PSI, and state transitions. The polypeptide is Cytochrome b6-f complex subunit 4 (Trichodesmium erythraeum (strain IMS101)).